A 218-amino-acid chain; its full sequence is Adenylate kinase (218 aa).

Residue 12–17 (GAGKGT) coordinates ATP. An NMP region spans residues 32–61 (STGDMLREARSSGTEMGKRVAEVMDRGELV). AMP is bound by residues threonine 33, arginine 38, 59-61 (ELV), 85-88 (GFPR), and glutamine 92. The interval 126–164 (GRFTCGNCGEVYHDVTKPTKEPGKCDVCGSTDLRRRADD) is LID. Arginine 127 contacts ATP. 2 residues coordinate Zn(2+): cysteine 130 and cysteine 133. Position 136–137 (136–137 (VY)) interacts with ATP. Residues cysteine 150 and cysteine 153 each contribute to the Zn(2+) site. AMP contacts are provided by arginine 161 and arginine 172. Alanine 200 contacts ATP.

The protein belongs to the adenylate kinase family. Monomer.

The protein localises to the cytoplasm. It catalyses the reaction AMP + ATP = 2 ADP. Its pathway is purine metabolism; AMP biosynthesis via salvage pathway; AMP from ADP: step 1/1. Functionally, catalyzes the reversible transfer of the terminal phosphate group between ATP and AMP. Plays an important role in cellular energy homeostasis and in adenine nucleotide metabolism. The polypeptide is Adenylate kinase (Paracoccus denitrificans (strain Pd 1222)).